A 404-amino-acid chain; its full sequence is Zinc metalloprotease Rip1 (404 aa).

Residues 1–21 (MMFVTGIVLFALAILISVALH) traverse the membrane as a helical segment. H21 contributes to the Zn(2+) binding site. Residue E22 is part of the active site. Residue H25 participates in Zn(2+) binding. The chain crosses the membrane as a helical span at residues 104–124 (PGMNLAICLVLIYAIALVWGL). The PDZ domain occupies 121–203 (VWGLPNLHPP…SVPIVVERDG (83 aa)). D202 serves as a coordination point for Zn(2+). Transmembrane regions (helical) follow at residues 313–333 (LWVA…AINL) and 373–393 (LLPA…LTVT).

The protein belongs to the peptidase M50B family. Requires Zn(2+) as cofactor.

It localises to the cell membrane. Its function is as follows. A probable site-2 protease (S2P) that cleaves type-2 transmembrane proteins within their membrane-spanning domains. Degrades anti-sigma factors RskA, RslA and RsmA, releasing sigma factors SigK, SigL and SigM from the cellular membrane, activating signaling pathways. Does not act on RsdA. Regulates the composition of extractable mycolic acids in the cell envelope in response to changes in membrane fluidity. Mediates transcriptional regulation of mycolic acid biosynthetic genes in response to detergent. Probably also cleaves PbpB (PBP3, FtsI); this cleavage is inhibited by Wag31-PbpBI interaction. Functionally, regulated intramembrane proteolysis (RIP) occurs when an extracytoplasmic signal (possibly oxidative stress) triggers a concerted proteolytic cascade to transmit information and elicit cellular responses. The membrane-spanning regulatory substrate protein (includes anti-sigma factors RskA, RslA, RsmA, and PbpB) is first cut extracytoplasmically (site-1 protease, S1P), then within the membrane itself (site-2 protease, S2P, this entry), while cytoplasmic proteases finish degrading the regulatory protein, liberating the effector protein (ECF sigma factors SigK, SigL and SigM). The protein is Zinc metalloprotease Rip1 (rip1) of Mycobacterium tuberculosis (strain ATCC 35801 / TMC 107 / Erdman).